Reading from the N-terminus, the 264-residue chain is 3'-5' ssDNA/RNA exonuclease TatD (264 aa).

The a divalent metal cation site is built by E92, H128, and H153.

The protein belongs to the metallo-dependent hydrolases superfamily. TatD-type hydrolase family. TatD subfamily. As to quaternary structure, monomer. The cofactor is Mg(2+).

Its subcellular location is the cytoplasm. 3'-5' exonuclease that prefers single-stranded DNA and RNA. May play a role in the H(2)O(2)-induced DNA damage repair. This Dickeya dadantii (strain 3937) (Erwinia chrysanthemi (strain 3937)) protein is 3'-5' ssDNA/RNA exonuclease TatD.